A 240-amino-acid polypeptide reads, in one-letter code: UDP-2,3-diacylglucosamine hydrolase (240 aa).

5 residues coordinate Mn(2+): Asp-9, His-11, Asp-43, Asn-81, and His-116. Position 81-82 (81-82 (NR)) interacts with substrate. Substrate is bound by residues Asp-124, Ser-162, Lys-166, Lys-169, and His-197. Mn(2+) contacts are provided by His-197 and His-199.

It belongs to the LpxH family. Mn(2+) serves as cofactor.

It is found in the cell inner membrane. The catalysed reaction is UDP-2-N,3-O-bis[(3R)-3-hydroxytetradecanoyl]-alpha-D-glucosamine + H2O = 2-N,3-O-bis[(3R)-3-hydroxytetradecanoyl]-alpha-D-glucosaminyl 1-phosphate + UMP + 2 H(+). The protein operates within glycolipid biosynthesis; lipid IV(A) biosynthesis; lipid IV(A) from (3R)-3-hydroxytetradecanoyl-[acyl-carrier-protein] and UDP-N-acetyl-alpha-D-glucosamine: step 4/6. Functionally, hydrolyzes the pyrophosphate bond of UDP-2,3-diacylglucosamine to yield 2,3-diacylglucosamine 1-phosphate (lipid X) and UMP by catalyzing the attack of water at the alpha-P atom. Involved in the biosynthesis of lipid A, a phosphorylated glycolipid that anchors the lipopolysaccharide to the outer membrane of the cell. This chain is UDP-2,3-diacylglucosamine hydrolase, found in Neisseria meningitidis serogroup B (strain ATCC BAA-335 / MC58).